Reading from the N-terminus, the 127-residue chain is Glycine cleavage system H protein (127 aa).

Residues 22–104 enclose the Lipoyl-binding domain; sequence KVRIGITDFA…YEKAWMIVVE (83 aa). At Lys-63 the chain carries N6-lipoyllysine.

The protein belongs to the GcvH family. In terms of assembly, the glycine cleavage system is composed of four proteins: P, T, L and H. Requires (R)-lipoate as cofactor.

Its function is as follows. The glycine cleavage system catalyzes the degradation of glycine. The H protein shuttles the methylamine group of glycine from the P protein to the T protein. Is also involved in protein lipoylation via its role as an octanoyl/lipoyl carrier protein intermediate. This Geobacillus sp. (strain WCH70) protein is Glycine cleavage system H protein.